Reading from the N-terminus, the 378-residue chain is Probable protein phosphatase 2C 55 (378 aa).

Disordered regions lie at residues 1-59 and 79-115; these read MRRH…ASKG and EGEA…GVGC. The span at 7–26 shows a compositional bias: low complexity; it reads LGLLRRAAASSTSAASSRAG. The span at 92-104 shows a compositional bias: basic residues; the sequence is GGRRGRNSKRQPP. The PPM-type phosphatase domain occupies 122–369; it reads SWGYSSFQGR…DNVTCIVLQF (248 aa). Residues Asp158, Gly159, Asp321, and Asp360 each contribute to the Mn(2+) site.

It belongs to the PP2C family. It depends on Mg(2+) as a cofactor. Requires Mn(2+) as cofactor.

It carries out the reaction O-phospho-L-seryl-[protein] + H2O = L-seryl-[protein] + phosphate. It catalyses the reaction O-phospho-L-threonyl-[protein] + H2O = L-threonyl-[protein] + phosphate. The chain is Probable protein phosphatase 2C 55 from Oryza sativa subsp. japonica (Rice).